The primary structure comprises 396 residues: NASP-related protein sim3 (396 aa).

The tract at residues 1 to 31 (MSSDTKTLENSKGNSATDADTKNPSSSDSRA) is disordered. TPR repeat units lie at residues 32 to 65 (IEQL…SESI) and 89 to 122 (IENS…GSFT). The disordered stretch occupies residues 135-164 (NEENSSIAHPEKESEEKETNEASPASEEDE). Residues 143–154 (HPEKESEEKETN) are compositionally biased toward basic and acidic residues. The stretch at 199 to 232 (ADIYDLLGELSLEIENFSQASQDLKTALEWKEKV) is one TPR 3 repeat. A coiled-coil region spans residues 267–329 (CEHVEKAAEI…QKTLDLKHGA (63 aa)). A compositionally biased stretch (basic and acidic residues) spans 284-301 (RENEVTDKKGKGKQKAEE). 2 disordered regions span residues 284 to 307 (RENE…LTSD) and 334 to 396 (EAVM…KKKD). The span at 343–353 (SSLLSKDSSSL) shows a compositional bias: low complexity.

Belongs to the NASP family. Interacts with cnp1, hht1, hht2 and hht3; has a preference for CENP-A (cnp1) over histone H3 (hht1/2/3).

It localises to the nucleus. Histone H3 and H3-like CENP-A-specific chaperone. Promotes delivery and incorporation of CENP-A in centromeric chromatin, probably by escorting nascent CENP-A to CENP-A chromatin assembly factors. Required for central core silencing and normal chromosome segregation. This chain is NASP-related protein sim3 (sim3), found in Schizosaccharomyces pombe (strain 972 / ATCC 24843) (Fission yeast).